Reading from the N-terminus, the 310-residue chain is Cytochrome f (310 aa).

The signal sequence occupies residues 1-27 (MRRLLSPLFAALIVGVTVLTAPSTSWA). Heme-binding residues include Tyr-28, Cys-48, Cys-51, and His-52. A helical membrane pass occupies residues 277 to 297 (IYGLLAFFAAVALAQIMLVLK).

Belongs to the cytochrome f family. As to quaternary structure, the 4 large subunits of the cytochrome b6-f complex are cytochrome b6, subunit IV (17 kDa polypeptide, PetD), cytochrome f and the Rieske protein, while the 4 small subunits are PetG, PetL, PetM and PetN. The complex functions as a dimer. Heme serves as cofactor.

It is found in the cellular thylakoid membrane. Functionally, component of the cytochrome b6-f complex, which mediates electron transfer between photosystem II (PSII) and photosystem I (PSI), cyclic electron flow around PSI, and state transitions. The protein is Cytochrome f of Synechococcus sp. (strain WH7803).